Here is a 476-residue protein sequence, read N- to C-terminus: Bifunctional protein HldE (476 aa).

Residues 1–318 are ribokinase; it reads MKPTLPNYDQ…AEAIHGSQDS (318 aa). 195-198 provides a ligand contact to ATP; that stretch reads NMLE. Residue Asp-264 is part of the active site. Residues 344 to 476 form a cytidylyltransferase region; sequence MTNGCFDILH…IIEAIKGGRG (133 aa).

It in the N-terminal section; belongs to the carbohydrate kinase PfkB family. This sequence in the C-terminal section; belongs to the cytidylyltransferase family. Homodimer.

It carries out the reaction D-glycero-beta-D-manno-heptose 7-phosphate + ATP = D-glycero-beta-D-manno-heptose 1,7-bisphosphate + ADP + H(+). It catalyses the reaction D-glycero-beta-D-manno-heptose 1-phosphate + ATP + H(+) = ADP-D-glycero-beta-D-manno-heptose + diphosphate. It functions in the pathway nucleotide-sugar biosynthesis; ADP-L-glycero-beta-D-manno-heptose biosynthesis; ADP-L-glycero-beta-D-manno-heptose from D-glycero-beta-D-manno-heptose 7-phosphate: step 1/4. Its pathway is nucleotide-sugar biosynthesis; ADP-L-glycero-beta-D-manno-heptose biosynthesis; ADP-L-glycero-beta-D-manno-heptose from D-glycero-beta-D-manno-heptose 7-phosphate: step 3/4. In terms of biological role, catalyzes the phosphorylation of D-glycero-D-manno-heptose 7-phosphate at the C-1 position to selectively form D-glycero-beta-D-manno-heptose-1,7-bisphosphate. Catalyzes the ADP transfer from ATP to D-glycero-beta-D-manno-heptose 1-phosphate, yielding ADP-D-glycero-beta-D-manno-heptose. This Aliivibrio fischeri (strain MJ11) (Vibrio fischeri) protein is Bifunctional protein HldE.